The following is a 165-amino-acid chain: Urease accessory protein UreE (165 aa).

Residues 137–156 form a disordered region; it reads EAGAYQSAPHGHSHAHGHDH.

Belongs to the UreE family.

Its subcellular location is the cytoplasm. Functionally, involved in urease metallocenter assembly. Binds nickel. Probably functions as a nickel donor during metallocenter assembly. The protein is Urease accessory protein UreE of Pseudomonas putida (strain GB-1).